Consider the following 305-residue polypeptide: Ribonuclease Z (305 aa).

Residues His-63, His-65, Asp-67, His-68, His-142, Asp-209, and His-267 each coordinate Zn(2+). The active-site Proton acceptor is the Asp-67.

This sequence belongs to the RNase Z family. As to quaternary structure, homodimer. Zn(2+) is required as a cofactor.

It catalyses the reaction Endonucleolytic cleavage of RNA, removing extra 3' nucleotides from tRNA precursor, generating 3' termini of tRNAs. A 3'-hydroxy group is left at the tRNA terminus and a 5'-phosphoryl group is left at the trailer molecule.. Functionally, zinc phosphodiesterase, which displays some tRNA 3'-processing endonuclease activity. Probably involved in tRNA maturation, by removing a 3'-trailer from precursor tRNA. The sequence is that of Ribonuclease Z from Nocardia farcinica (strain IFM 10152).